A 395-amino-acid polypeptide reads, in one-letter code: Dihydroorotate dehydrogenase (quinone), mitochondrial (395 aa).

The N-terminal 10 residues, 1 to 10 (MAWRHLKKRA), are a transit peptide targeting the mitochondrion; not cleaved. The Mitochondrial matrix segment spans residues 1-10 (MAWRHLKKRA). A helical transmembrane segment spans residues 11–30 (QDAVIILGGGGLLFASYLMA). Residues 31–395 (TGDERFYAEH…TDAIGADHRR (365 aa)) lie on the Mitochondrial intermembrane side of the membrane. FMN is bound by residues 95–99 (AGFDK) and S119. K99 contacts substrate. Substrate is bound at residue 144–148 (NRYGF). FMN is bound by residues N180 and N211. Substrate is bound at residue 211–216 (NVSSPN). S214 (nucleophile) is an active-site residue. Positions 254 and 282 each coordinate FMN. 283–284 (NT) provides a ligand contact to substrate. Residues G305, G334, and 355–356 (YT) contribute to the FMN site.

The protein belongs to the dihydroorotate dehydrogenase family. Type 2 subfamily. In terms of assembly, monomer. The cofactor is FMN. Post-translationally, the uncleaved transit peptide is required for mitochondrial targeting and proper membrane integration.

It is found in the mitochondrion inner membrane. It carries out the reaction (S)-dihydroorotate + a quinone = orotate + a quinol. It functions in the pathway pyrimidine metabolism; UMP biosynthesis via de novo pathway; orotate from (S)-dihydroorotate (quinone route): step 1/1. Catalyzes the conversion of dihydroorotate to orotate with quinone as electron acceptor. Required for UMP biosynthesis via de novo pathway. The chain is Dihydroorotate dehydrogenase (quinone), mitochondrial (DHODH) from Homo sapiens (Human).